Here is a 176-residue protein sequence, read N- to C-terminus: NAD(P)H-quinone oxidoreductase subunit J (176 aa).

Positions 1–10 (MSETPTSPNQ) are enriched in polar residues. The tract at residues 1-22 (MSETPTSPNQDLPEAPQAGPLS) is disordered.

The protein belongs to the complex I 30 kDa subunit family. As to quaternary structure, NDH-1 can be composed of about 15 different subunits; different subcomplexes with different compositions have been identified which probably have different functions.

The protein localises to the cellular thylakoid membrane. It catalyses the reaction a plastoquinone + NADH + (n+1) H(+)(in) = a plastoquinol + NAD(+) + n H(+)(out). The catalysed reaction is a plastoquinone + NADPH + (n+1) H(+)(in) = a plastoquinol + NADP(+) + n H(+)(out). Its function is as follows. NDH-1 shuttles electrons from an unknown electron donor, via FMN and iron-sulfur (Fe-S) centers, to quinones in the respiratory and/or the photosynthetic chain. The immediate electron acceptor for the enzyme in this species is believed to be plastoquinone. Couples the redox reaction to proton translocation, and thus conserves the redox energy in a proton gradient. Cyanobacterial NDH-1 also plays a role in inorganic carbon-concentration. This Synechococcus sp. (strain RCC307) protein is NAD(P)H-quinone oxidoreductase subunit J.